We begin with the raw amino-acid sequence, 721 residues long: Transcription activator of gluconeogenesis ARB_05058 (721 aa).

A compositionally biased stretch (polar residues) spans 1–34; the sequence is MSPHQTTGQESDNMTVNGENAQASSQYIQSNEEM. The tract at residues 1–62 is disordered; the sequence is MSPHQTTGQE…PSRPKRKKAK (62 aa). Basic and acidic residues predominate over residues 40–55; it reads TEKKASTAKAAKDPSR. Residues 65–93 constitute a DNA-binding region (zn(2)-C6 fungal-type); it reads CYACQRGHLTCGDERPCQRCIKRGFQDAC. Disordered stretches follow at residues 128–224, 263–300, 353–400, 533–567, and 635–666; these read QNNA…FNSA, GDTP…SNQA, SPAS…TPQL, NHNV…YNSS, and GLNG…QRRW. Polar residues-rich tracts occupy residues 133-213, 267-277, 287-300, and 361-379; these read GSNT…TPSA, PSESGAQRGSI, LTGS…SNQA, and MMTT…GAFN. Composition is skewed to low complexity over residues 380–399 and 543–553; these read SRQN…STPQ and GLMTGSTSRGS. A compositionally biased stretch (polar residues) spans 640–661; it reads AASNETNELNGSLTNGATTNGR.

This sequence belongs to the ERT1/acuK family.

Its subcellular location is the nucleus. In terms of biological role, transcription factor which regulates nonfermentable carbon utilization. Activator of gluconeogenetic genes. This chain is Transcription activator of gluconeogenesis ARB_05058, found in Arthroderma benhamiae (strain ATCC MYA-4681 / CBS 112371) (Trichophyton mentagrophytes).